Consider the following 1616-residue polypeptide: MAYTQTATSSALLETVRGNNTLVNDLAKRRLYDTAVDEFNARDRRPKVNFSKVVSEEQTLIATKAYPEFQITFYNTQNAVHSLAGGLRSLELEYLMMQIPYGSLTYDIGGNFASHLFKGRAYVHCCMPNLDVRDIMRHEGQKDSIELYLSRLERGNKHVPNFQKEAFDRYAEMPNEVVCHDTFQTCRHSQECYTGRVYAIALHSIYDIPADEFGAALLRKNVHVCYAAFHFSENLLLEDSHVNLDEINACFQRDGDRLTFSFASESTLNYSHSYSNILKYVCKTYFPASNREVYMKEFLVTRVNTWFCKFSRIDTFLLYKGVAHKGVDNEQFYKAMEDAWHYKKTLAMCNSERILLEDSSSVNYWFPKMRDMVIVPLFDISLETSKRTRKEVLVSKDFVYTVLNHIRTYQAKALTYSNVLSFVESIRSRVIINGVTARSEWDVDKSLLQSLSMTFFLHTKLAVLKDDLLISKFALGPKTVSQHVWDEISLAFGNAFPSIKERLINRKLIKITENALEIRVPDLYVTFHDRLVSEYKMSVDMPVLDIRKKMEETEEMYNALSELSVLKTSDKFDVDVFSQMCQSLEVDPMTAAKVIVAVMSNESGLTLTFEQPTEANVALALQDSEKASDGALVVTSRDVEEPSIRGSMARGELQLAGLSGDVPESSYTRSEEIESLEQFHMATASSLIHKQMCSIVYTGPLKVQQMKNFIDSLVASLSAAVSNLVKILKDTAAIDLETRQKFGVLDVASKRWLVKPSAKNHAWGVVETHARKYHVALLEHDEFGIITCDNWRRVAVSSESVVYSDMAKLRTLRRLLKDGEPHVSSAKVVLVDGVPGCGKTKEILSRVNFEEDLILVPGRQAAEMIRRRANASGIIVATKDNVRTVDSFLMNYGKGARCQFKRLFIDEGLMLHTGCVNFLVEMSLCDIAYVYGDTQQIPYINRVTGFPYPAHFAKLEVDEVETRRTTLRCPADVTHFLNQRYEGHVMCTSSEKKSVSQEMVSGAASINPVSKPLKGKILTFTQSDKEALLSRGYADVHTVHEVQGETYADVSLVRLTPTPVSIIARDSPHVLVSLSRHTKSLKYYTVVMDPLVSIIRDLERVSSYLLDMYKVDAGTQXQLQVDSVFKNFNLFVAAPKTGDISDMQFYYDKCLPGNSTLLNNYDAVTMKLTDISLNVKDCILDMSKSVAAPKDVKPTLIPMVRTAAEMPRQTGLLENLVAMIKRNFNSPELSGVVDIENTASLVVDKFFDSYLLKEKRKPNKNFSLFSRESLNRWIAKQEQVTIGQLADFDFVDLPAVDQYRHMIKAQPKQKLDLSIQTEYPALQTIVYHSKKINAIFGPLFSELTRQLLDSIDSSRFLFFTRKTPAQIEDFFGDLDSHVPMDVLELDVSKYDKSQNEFHCAVEYEIWRRLGLEDFLAEVWKQGHRKTTLKDYTAGIKTCLWYQRKSGDVTTFIGNTVIIASCLASMLPMEKLIKGAFCGDDSLLYFPKGCEYPDIQQAANLMWNFEAKLFKKQYGYFCGRYVIHHDRGCIVYYDPLKLISKLGAKHIKDWDHLEEFRRSLCDVAESLNNCAYYTQLDDAVGEVHKTAPPGSFVYKSLVKYLSDKVLFRSLFLDGSSC.

The interval 50 to 458 (FSKVVSEEQT…QSLSMTFFLH (409 aa)) is methyltransferase. The Alphavirus-like MT domain occupies 72–281 (TFYNTQNAVH…HSYSNILKYV (210 aa)). Positions 801–963 (VVYSDMAKLR…KLEVDEVETR (163 aa)) constitute a (+)RNA virus helicase ATP-binding domain. Residues 830–1085 (LVDGVPGCGK…RHTKSLKYYT (256 aa)) form a helicase region. ATP is bound at residue 833 to 840 (GVPGCGKT). In terms of domain architecture, (+)RNA virus helicase C-terminal spans 964–1116 (RTTLRCPADV…DMYKVDAGTQ (153 aa)). A RdRp catalytic domain is found at 1380–1493 (MDVLELDVSK…YFPKGCEYPD (114 aa)).

It belongs to the ssRNA positive-strand viruses RNA-directed RNA polymerase family. As to quaternary structure, heterodimer of a large and a small subunit.

The enzyme catalyses RNA(n) + a ribonucleoside 5'-triphosphate = RNA(n+1) + diphosphate. It carries out the reaction ATP + H2O = ADP + phosphate + H(+). Is an RNA-dependent RNA polymerase active in viral RNA replication. Functionally, is a methyltransferase active in RNA capping and an RNA helicase. Methyltransferase displays a cytoplasmic capping enzyme activity. This function is necessary since all viral RNAs are synthesized in the cytoplasm, and host capping enzymes are restricted to the nucleus. Helicase region probably exhibits NTPase and RNA unwinding activities (Potential). It also acts as a suppressor of RNA-mediated gene silencing, also known as post-transcriptional gene silencing (PTGS), a mechanism of plant viral defense that limits the accumulation of viral RNAs. May mediate silencing suppression through either inhibition of HEN1-mediated siRNA or siRNA demethylation. The polypeptide is Replicase large subunit (Antirrhinum majus (Garden snapdragon)).